The following is a 508-amino-acid chain: MSQEKYIMAIDQGTTSSRAIIFNQKGEKVSSSQKEFPQIFPHAGWVEHNANQIWNSVQSVIAGAFIESSIKPSQIEAIGITNQRETTVVWDKKTGVPIYNAIVWQSRQTAPIAEQLKQDGHTKMIHEKTGLVIDAYFSATKIRWILDHVPGAQERAEKGELLFGTIDTWLVWKLTDGAVHVTDYSNAARTMLYNIKDLTWDDEILELLNIPKDMLPEVKSNSEIYGKTAAFHFYGGEVPISGMAGDQQAALFGQLAFEPGMVKNTYGTGSFIIMNTGDEMQLSSNNLLTTIGYGIGGKVHYALEGSIFIAGSAIQWLRDGLKMIETSPESEQFALASTSDDEVYVVPAFTGLGAPYWDSNARGSVFGLTRGTSKEDFVKATLQSIAYQVRDVIDTMQVDSGIDIQQLRVDGGAAMNNMLMQFQADILGIDIARAKNLETTALGAAFLAGLAVGYWEDMDALKELNATGQLFKASMNESRKEKLYKGWKRAVKATQVFTQEEDADDDAK.

Thr-14 serves as a coordination point for ADP. Positions 14, 15, and 16 each coordinate ATP. Thr-14 contacts sn-glycerol 3-phosphate. An ADP-binding site is contributed by Arg-18. Arg-84, Glu-85, and Tyr-136 together coordinate sn-glycerol 3-phosphate. Arg-84, Glu-85, and Tyr-136 together coordinate glycerol. His-232 bears the Phosphohistidine; by HPr mark. Asp-246 serves as a coordination point for sn-glycerol 3-phosphate. Glycerol is bound by residues Asp-246 and Gln-247. 2 residues coordinate ADP: Thr-268 and Gly-311. ATP contacts are provided by Thr-268, Gly-311, Gln-315, and Gly-412. Positions 412 and 416 each coordinate ADP.

It belongs to the FGGY kinase family. Homotetramer and homodimer (in equilibrium). The phosphoenolpyruvate-dependent sugar phosphotransferase system (PTS), including enzyme I, and histidine-containing protein (HPr) are required for the phosphorylation, which leads to the activation of the enzyme.

It catalyses the reaction glycerol + ATP = sn-glycerol 3-phosphate + ADP + H(+). The protein operates within polyol metabolism; glycerol degradation via glycerol kinase pathway; sn-glycerol 3-phosphate from glycerol: step 1/1. Its activity is regulated as follows. Activated by phosphorylation and inhibited by fructose 1,6-bisphosphate (FBP). Functionally, key enzyme in the regulation of glycerol uptake and metabolism. Catalyzes the phosphorylation of glycerol to yield sn-glycerol 3-phosphate. This is Glycerol kinase from Streptococcus pyogenes serotype M18 (strain MGAS8232).